The sequence spans 791 residues: Sphingomyelin phosphodiesterase 4 (791 aa).

The helical transmembrane segment at 755 to 775 (LFALLSFGLFSSTGLILIISF) threads the bilayer.

Mg(2+) serves as cofactor.

The protein localises to the endoplasmic reticulum membrane. Its subcellular location is the golgi apparatus membrane. It localises to the nucleus envelope. It is found in the cell membrane. The protein resides in the sarcolemma. The enzyme catalyses a sphingomyelin + H2O = phosphocholine + an N-acylsphing-4-enine + H(+). Catalyzes the hydrolysis of membrane sphingomyelin to form phosphorylcholine and ceramide. It has a relevant role in the homeostasis of membrane sphingolipids, thereby influencing membrane integrity, and endoplasmic reticulum organization and function. May sensitize cells to DNA damage-induced apoptosis. The protein is Sphingomyelin phosphodiesterase 4 (smpd4) of Danio rerio (Zebrafish).